A 351-amino-acid chain; its full sequence is Protein-glutamate methylesterase/protein-glutamine glutaminase (351 aa).

The region spanning 3-120 (KTLVVDDSAL…EISKIENELV (118 aa)) is the Response regulatory domain. The residue at position 54 (D54) is a 4-aspartylphosphate. A CheB-type methylesterase domain is found at 160-347 (ILIGSSTGGP…EQIVRMIEVK (188 aa)). Active-site residues include S165, H192, and D289.

This sequence belongs to the CheB family. Post-translationally, phosphorylated by CheA. Phosphorylation of the N-terminal regulatory domain activates the methylesterase activity.

Its subcellular location is the cytoplasm. The catalysed reaction is [protein]-L-glutamate 5-O-methyl ester + H2O = L-glutamyl-[protein] + methanol + H(+). The enzyme catalyses L-glutaminyl-[protein] + H2O = L-glutamyl-[protein] + NH4(+). Functionally, involved in chemotaxis. Part of a chemotaxis signal transduction system that modulates chemotaxis in response to various stimuli. Catalyzes the demethylation of specific methylglutamate residues introduced into the chemoreceptors (methyl-accepting chemotaxis proteins or MCP) by CheR. Also mediates the irreversible deamidation of specific glutamine residues to glutamic acid. The chain is Protein-glutamate methylesterase/protein-glutamine glutaminase from Methanococcoides burtonii (strain DSM 6242 / NBRC 107633 / OCM 468 / ACE-M).